The following is a 391-amino-acid chain: Leucine-rich repeat-containing protein 74B (391 aa).

Residues 1-38 form a disordered region; sequence MKGPCEVQKNEDQEGEAAATGPQAETLEAERSWTADSH. Residues 28 to 38 are compositionally biased toward basic and acidic residues; sequence EAERSWTADSH. LRR repeat units follow at residues 106 to 126, 134 to 154, 162 to 182, 190 to 211, 218 to 239, 246 to 259, 274 to 294, 302 to 323, and 332 to 354; these read YIKR…EALA, IISD…QAIC, TVEK…QHLA, GLKS…ILGP, GLTE…AFAR, FLKV…GFGD, VLEE…LKLG, TLRI…GLLK, and ALEL…ASSM. Positions 371 to 391 are disordered; the sequence is KDWPQASTPSQPASAPSDSGL. The segment covering 374–391 has biased composition (low complexity); that stretch reads PQASTPSQPASAPSDSGL.

The sequence is that of Leucine-rich repeat-containing protein 74B from Mus musculus (Mouse).